The primary structure comprises 617 residues: Proline--tRNA ligase (617 aa).

This sequence belongs to the class-II aminoacyl-tRNA synthetase family. ProS type 1 subfamily. As to quaternary structure, homodimer.

The protein resides in the cytoplasm. The enzyme catalyses tRNA(Pro) + L-proline + ATP = L-prolyl-tRNA(Pro) + AMP + diphosphate. In terms of biological role, catalyzes the attachment of proline to tRNA(Pro) in a two-step reaction: proline is first activated by ATP to form Pro-AMP and then transferred to the acceptor end of tRNA(Pro). As ProRS can inadvertently accommodate and process non-cognate amino acids such as alanine and cysteine, to avoid such errors it has two additional distinct editing activities against alanine. One activity is designated as 'pretransfer' editing and involves the tRNA(Pro)-independent hydrolysis of activated Ala-AMP. The other activity is designated 'posttransfer' editing and involves deacylation of mischarged Ala-tRNA(Pro). The misacylated Cys-tRNA(Pro) is not edited by ProRS. This Treponema pallidum (strain Nichols) protein is Proline--tRNA ligase.